The sequence spans 451 residues: ESX secretion system protein YukC (451 aa).

The chain crosses the membrane as a helical span at residues 221–241 (IGLGLIVLLVPALIYSMYALF). The stretch at 362–447 (DEDIQKELDS…KKETEKKDEK (86 aa)) forms a coiled coil. Residues 376–386 (LEKAQKERQEN) are compositionally biased toward basic and acidic residues. The tract at residues 376-451 (LEKAQKERQE…EKKDEKKDDK (76 aa)) is disordered. Over residues 387-397 (KQSNSETSLVD) the composition is skewed to polar residues. The segment covering 406-451 (DEEKQAEEKAAEEKAAAEEKAKKEEQKEKEDEKKETEKKDEKKDDK) has biased composition (basic and acidic residues).

Belongs to the EssB family.

Its subcellular location is the cell membrane. Its function is as follows. Required for YukE secretion. Probable component or regulator of the ESX/ESAT-6-like secretion system (BsEss). Required to deliver LXG toxins to target cells. The sequence is that of ESX secretion system protein YukC (yukC) from Bacillus subtilis (strain 168).